A 230-amino-acid polypeptide reads, in one-letter code: Sugar fermentation stimulation protein homolog (230 aa).

The protein belongs to the SfsA family.

The polypeptide is Sugar fermentation stimulation protein homolog (Clostridium botulinum (strain 657 / Type Ba4)).